Here is a 1222-residue protein sequence, read N- to C-terminus: Deubiquitinating protein VCPIP1 (1222 aa).

Positions 1 to 21 are enriched in pro residues; that stretch reads MSQPPPPPPPLPPPPPPPEAP. The tract at residues 1–36 is disordered; sequence MSQPPPPPPPLPPPPPPPEAPQTPSSLASAAASGGL. The segment covering 25–36 has biased composition (low complexity); sequence SSLASAAASGGL. An OTU domain is found at 208–361; that stretch reads LIPVHVDGDG…RNHYIPLVGI (154 aa). Aspartate 216 is a catalytic residue. Cysteine 219 functions as the Nucleophile in the catalytic mechanism. Histidine 354 is an active-site residue. An N6-acetyllysine modification is found at lysine 408. 3 disordered regions span residues 725–776, 989–1009, and 1024–1074; these read SVMQ…KEKK, EATT…LGSG, and AFQG…VFTA. Residues serine 747 and serine 757 each carry the phosphoserine modification. Low complexity predominate over residues 755 to 771; that stretch reads PSSAPATPTKAPYSPTT. Threonine 763 is subject to Phosphothreonine. Phosphoserine occurs at positions 768, 994, and 998. Basic and acidic residues predominate over residues 1041-1050; sequence LDPRARETSV. Residues 1057 to 1074 are compositionally biased toward polar residues; it reads GTDFSNSSTKTEPSVFTA. Phosphoserine is present on serine 1077. Disordered stretches follow at residues 1113 to 1175 and 1188 to 1222; these read VSSI…TETT and ATRS…MDHS. Residues 1143-1157 are compositionally biased toward polar residues; the sequence is VVSSSAKSGSLQTGL. A compositionally biased stretch (low complexity) spans 1163 to 1175; sequence LTGGTENLNTETT. Serine 1198 bears the Phosphoserine mark. Acidic residues predominate over residues 1200 to 1209; it reads EELEEMDSQD. Residue serine 1207 is modified to Phosphoserine; by ATM. Residues 1210 to 1222 are compositionally biased toward polar residues; that stretch reads AEMTNTTEPMDHS.

As to quaternary structure, binds VCP and the ternary complex containing STX5A, NSFL1C and VCP. Post-translationally, phosphorylated at Ser-1207 by ATM or ATR following induction of covalent DNA-protein cross-links (DPCs).

The protein localises to the nucleus. It localises to the cytoplasm. It is found in the endoplasmic reticulum. The protein resides in the golgi apparatus. Its subcellular location is the golgi stack. The enzyme catalyses Thiol-dependent hydrolysis of ester, thioester, amide, peptide and isopeptide bonds formed by the C-terminal Gly of ubiquitin (a 76-residue protein attached to proteins as an intracellular targeting signal).. Deubiquitinating enzyme involved in DNA repair and reassembly of the Golgi apparatus and the endoplasmic reticulum following mitosis. Necessary for VCP-mediated reassembly of Golgi stacks after mitosis. Plays a role in VCP-mediated formation of transitional endoplasmic reticulum (tER). Mediates dissociation of the ternary complex containing STX5A, NSFL1C and VCP. Also involved in DNA repair following phosphorylation by ATM or ATR: acts by catalyzing deubiquitination of SPRTN, thereby promoting SPRTN recruitment to chromatin and subsequent proteolytic cleavage of covalent DNA-protein cross-links (DPCs). Hydrolyzes 'Lys-11'- and 'Lys-48'-linked polyubiquitin chains. Functionally, (Microbial infection) Regulates the duration of C.botulinum neurotoxin type A (BoNT/A) intoxication by catalyzing deubiquitination of Botulinum neurotoxin A light chain (LC), thereby preventing LC degradation by the proteasome, and accelerating botulinum neurotoxin intoxication in patients. The polypeptide is Deubiquitinating protein VCPIP1 (Homo sapiens (Human)).